A 255-amino-acid polypeptide reads, in one-letter code: 5-oxoprolinase subunit A (255 aa).

It belongs to the LamB/PxpA family. Forms a complex composed of PxpA, PxpB and PxpC.

It carries out the reaction 5-oxo-L-proline + ATP + 2 H2O = L-glutamate + ADP + phosphate + H(+). Catalyzes the cleavage of 5-oxoproline to form L-glutamate coupled to the hydrolysis of ATP to ADP and inorganic phosphate. The chain is 5-oxoprolinase subunit A from Clostridium kluyveri (strain ATCC 8527 / DSM 555 / NBRC 12016 / NCIMB 10680 / K1).